Here is a 124-residue protein sequence, read N- to C-terminus: UPF0382 membrane protein HI_1073 (124 aa).

The next 3 membrane-spanning stretches (helical) occupy residues 6–26 (LTLV…AAHG), 70–90 (SMSS…ALAF), and 95–115 (VIVW…ISLA).

This sequence belongs to the UPF0382 family.

It localises to the cell membrane. The protein is UPF0382 membrane protein HI_1073 of Haemophilus influenzae (strain ATCC 51907 / DSM 11121 / KW20 / Rd).